The sequence spans 311 residues: Giardin subunit gamma (311 aa).

Positions 185–233 (GLQTEINSLEAIIEREFAQAANRLNQEVSNFKESFDASERNIKLQKKHV) form a coiled coil.

Interacts with EB1.

The protein localises to the cytoplasm. The protein resides in the cytoskeleton. Functionally, giardins are involved in parasite attachment to the intestinal mucosa and in the cytoskeletal disassembly and reassembly that marks the transition from infectious trophozoite to transmissible cyst. They may interact with other cytoskeletal proteins such as microtubules in the microribbons or crossbridges, to maintain the integrity of the ventral disk. Involved in formation of the ventral disk. This is Giardin subunit gamma from Giardia intestinalis (Giardia lamblia).